The following is a 956-amino-acid chain: Glutamyl aminopeptidase (956 aa).

Residues 1–21 lie on the Cytoplasmic side of the membrane; the sequence is MILEERSSWEGSKRYCIKTKH. A helical; Signal-anchor for type II membrane protein membrane pass occupies residues 22–42; the sequence is VAIICAVVVAVGLIVGLSVGL. Residues 43–956 lie on the Extracellular side of the membrane; it reads TRSCDSTEGM…IRNWFLDLNG (914 aa). The disordered stretch occupies residues 48–87; it reads STEGMTQGTTQGTTQAPSHLPPVTSPPEDQGVCPASEDES. The span at 49-62 shows a compositional bias: low complexity; that stretch reads TEGMTQGTTQGTTQ. 2 N-linked (GlcNAc...) asparagine glycosylation sites follow: Asn-126 and Asn-199. Glu-225 is a substrate binding site. N-linked (GlcNAc...) asparagine glycosylation is present at Asn-326. 359 to 363 serves as a coordination point for substrate; sequence GAMEN. His-395 contributes to the Zn(2+) binding site. The active-site Proton acceptor is Glu-396. Residues His-399 and Glu-418 each contribute to the Zn(2+) site. N-linked (GlcNAc...) asparagine glycosylation is found at Asn-556, Asn-569, Asn-599, Asn-643, Asn-647, Asn-679, Asn-764, Asn-797, Asn-802, and Asn-829. Residue Arg-888 coordinates substrate.

Belongs to the peptidase M1 family. As to quaternary structure, homodimer; disulfide-linked. It depends on Zn(2+) as a cofactor.

The protein resides in the cell membrane. It catalyses the reaction Release of N-terminal glutamate (and to a lesser extent aspartate) from a peptide.. Substrate specificity is modulated by calcium which enhances the enzymatic activity for cleavage of acidic residues while reducing its activity with basic residues. Inhibited by aminopeptidase inhibitors amastatin and bestatin. Regulates central hypertension through its calcium-modulated preference to cleave N-terminal acidic residues from peptides such as angiotensin II. The sequence is that of Glutamyl aminopeptidase (ENPEP) from Bos taurus (Bovine).